The primary structure comprises 129 residues: Small ribosomal subunit protein uS11 (129 aa).

The protein belongs to the universal ribosomal protein uS11 family. In terms of assembly, part of the 30S ribosomal subunit. Interacts with proteins S7 and S18. Binds to IF-3.

Its function is as follows. Located on the platform of the 30S subunit, it bridges several disparate RNA helices of the 16S rRNA. Forms part of the Shine-Dalgarno cleft in the 70S ribosome. In Staphylococcus epidermidis (strain ATCC 12228 / FDA PCI 1200), this protein is Small ribosomal subunit protein uS11.